The chain runs to 432 residues: MLNLKTSAALFERAKKVIPGGVNSPVRAFNSVGGTPVFVTKGEGARMIDVDGNSYIDYVGSWGPFILGHSHPRVIEAIERTMKAHGTSFGAPTELEIELAELIIKVVPSVEMVRMVNSGTEATMSAIRLARGYTKREKIIKFEGCYHGHGDSFLIKAGSGALTLGAPSSPGVTEGTAKDTLNATYNDIESVRALVDSNKGNVAAIIIEAVGGNMGVVPSKKEFLVALRELCDKEGIVLIFDEVMTGFRVALGGAQEVYGITPDLTTMGKIIGGGLPVGAYGGKKEIMEHVSPVGTVYQAGTLSGNPLAMSAGLATIKILAEENPYPELEKKAVIIEEGFKSNLEKLGLNLCQTRVGSMSCLFFTDKEVVDFETANSSDTAKFATYFNSMLESGIYLACSQFEAMFISTMHTEEDLQKTIEANYNALKLAYGK.

K269 carries the N6-(pyridoxal phosphate)lysine modification.

The protein belongs to the class-III pyridoxal-phosphate-dependent aminotransferase family. HemL subfamily. In terms of assembly, homodimer. It depends on pyridoxal 5'-phosphate as a cofactor.

It localises to the cytoplasm. It carries out the reaction (S)-4-amino-5-oxopentanoate = 5-aminolevulinate. It functions in the pathway porphyrin-containing compound metabolism; protoporphyrin-IX biosynthesis; 5-aminolevulinate from L-glutamyl-tRNA(Glu): step 2/2. The protein operates within porphyrin-containing compound metabolism; chlorophyll biosynthesis. The protein is Glutamate-1-semialdehyde 2,1-aminomutase of Chloroherpeton thalassium (strain ATCC 35110 / GB-78).